Reading from the N-terminus, the 205-residue chain is Large ribosomal subunit protein uL4 (205 aa).

Residues 44–79 (RAGTKAQKTRREVSGSGAKPWRQKGTGRARAGSSRS) form a disordered region.

It belongs to the universal ribosomal protein uL4 family. In terms of assembly, part of the 50S ribosomal subunit.

In terms of biological role, one of the primary rRNA binding proteins, this protein initially binds near the 5'-end of the 23S rRNA. It is important during the early stages of 50S assembly. It makes multiple contacts with different domains of the 23S rRNA in the assembled 50S subunit and ribosome. Its function is as follows. Forms part of the polypeptide exit tunnel. The protein is Large ribosomal subunit protein uL4 of Coxiella burnetii (strain Dugway 5J108-111).